The chain runs to 669 residues: UvrABC system protein B (669 aa).

In terms of domain architecture, Helicase ATP-binding spans 26–183; that stretch reads TNFHAGIAKQ…RHLTELQYTR (158 aa). 39–46 provides a ligand contact to ATP; it reads GVTGSGKT. The Beta-hairpin signature appears at 92–115; that stretch reads YYDYYQPEAYVPASDTFIEKDSSI. The 167-residue stretch at 431-597 folds into the Helicase C-terminal domain; it reads QVDDLISQIN…SVVRPISDIL (167 aa). A UVR domain is found at 631–666; sequence AAQMKMLEQQMYQHARDLEFEDAARIRDQIQRLREA.

The protein belongs to the UvrB family. As to quaternary structure, forms a heterotetramer with UvrA during the search for lesions. Interacts with UvrC in an incision complex.

It is found in the cytoplasm. In terms of biological role, the UvrABC repair system catalyzes the recognition and processing of DNA lesions. A damage recognition complex composed of 2 UvrA and 2 UvrB subunits scans DNA for abnormalities. Upon binding of the UvrA(2)B(2) complex to a putative damaged site, the DNA wraps around one UvrB monomer. DNA wrap is dependent on ATP binding by UvrB and probably causes local melting of the DNA helix, facilitating insertion of UvrB beta-hairpin between the DNA strands. Then UvrB probes one DNA strand for the presence of a lesion. If a lesion is found the UvrA subunits dissociate and the UvrB-DNA preincision complex is formed. This complex is subsequently bound by UvrC and the second UvrB is released. If no lesion is found, the DNA wraps around the other UvrB subunit that will check the other stand for damage. The protein is UvrABC system protein B of Xylella fastidiosa (strain M12).